A 234-amino-acid polypeptide reads, in one-letter code: Protein SOP4 (234 aa).

The first 18 residues, 1 to 18, serve as a signal peptide directing secretion; sequence MFSQIVLLLSAFIYVVSA. Over 19–188 the chain is Lumenal; it reads TARRGTIKGR…VGNILNSRWK (170 aa). N-linked (GlcNAc...) asparagine glycans are attached at residues Asn-35, Asn-53, Asn-85, Asn-115, and Asn-170. The chain crosses the membrane as a helical span at residues 189-209; it reads LAGVITLIALVVFPIIVEKLD. The Cytoplasmic segment spans residues 210–234; sequence PETARAIREEAKRKQREKYAAVASK.

This sequence belongs to the SOP4 family.

Its subcellular location is the endoplasmic reticulum membrane. Involved in the export of PMA1, possibly through the monitoring or assisting of PMA1 folding and acquisition of competence to enter vesicles. This chain is Protein SOP4 (SOP4), found in Saccharomyces cerevisiae (strain YJM789) (Baker's yeast).